A 678-amino-acid chain; its full sequence is Probable N-methylproline demethylase (678 aa).

Residues Gly-59, Gln-102, Arg-220, Lys-299, and 321–322 (TR) contribute to the FMN site. [4Fe-4S] cluster-binding residues include Cys-345, Cys-351, and Cys-363. Positions 396, 415, 423, 433, and 460 each coordinate FAD.

The protein in the N-terminal section; belongs to the NADH:flavin oxidoreductase/NADH oxidase family. It depends on FMN as a cofactor. Requires FAD as cofactor. [4Fe-4S] cluster serves as cofactor.

It carries out the reaction N-methyl-L-proline + NAD(+) + H2O = L-proline + formaldehyde + NADH + H(+). It functions in the pathway amine and polyamine degradation; stachydrine degradation. Functionally, possible NADH-dependent oxidase, may function as a demethylase that converts N-methylproline to proline. The polypeptide is Probable N-methylproline demethylase (Rhizobium meliloti (strain 1021) (Ensifer meliloti)).